The chain runs to 435 residues: Xylose isomerase (435 aa).

Residues H99 and D102 contribute to the active site. The Mg(2+) site is built by E230, E266, H269, D294, D305, D307, and D337.

It belongs to the xylose isomerase family. As to quaternary structure, homotetramer. Mg(2+) is required as a cofactor.

The protein resides in the cytoplasm. It carries out the reaction alpha-D-xylose = alpha-D-xylulofuranose. This Tetragenococcus halophilus (Pediococcus halophilus) protein is Xylose isomerase (xylA).